The following is a 201-amino-acid chain: Glycerol-3-phosphate acyltransferase (201 aa).

Helical transmembrane passes span 10-30 (MLIG…GLIL), 60-80 (LAAA…LIAA), 86-106 (AAIA…WIGF), 116-136 (LGVL…AWIV), 139-159 (LLTR…PIAL), and 166-186 (ALAA…RANI).

This sequence belongs to the PlsY family. As to quaternary structure, probably interacts with PlsX.

Its subcellular location is the cell inner membrane. It catalyses the reaction an acyl phosphate + sn-glycerol 3-phosphate = a 1-acyl-sn-glycero-3-phosphate + phosphate. The protein operates within lipid metabolism; phospholipid metabolism. Catalyzes the transfer of an acyl group from acyl-phosphate (acyl-PO(4)) to glycerol-3-phosphate (G3P) to form lysophosphatidic acid (LPA). This enzyme utilizes acyl-phosphate as fatty acyl donor, but not acyl-CoA or acyl-ACP. This is Glycerol-3-phosphate acyltransferase from Brucella ovis (strain ATCC 25840 / 63/290 / NCTC 10512).